The following is a 192-amino-acid chain: Protein GrpE (192 aa).

A compositionally biased stretch (basic and acidic residues) spans 1–20 (MEERNEQVVEEVKEEVKEAQ). The tract at residues 1 to 34 (MEERNEQVVEEVKEEVKEAQVEEAVTSEDSEETV) is disordered. Positions 25 to 34 (VTSEDSEETV) are enriched in acidic residues.

This sequence belongs to the GrpE family. Homodimer.

It is found in the cytoplasm. Participates actively in the response to hyperosmotic and heat shock by preventing the aggregation of stress-denatured proteins, in association with DnaK and GrpE. It is the nucleotide exchange factor for DnaK and may function as a thermosensor. Unfolded proteins bind initially to DnaJ; upon interaction with the DnaJ-bound protein, DnaK hydrolyzes its bound ATP, resulting in the formation of a stable complex. GrpE releases ADP from DnaK; ATP binding to DnaK triggers the release of the substrate protein, thus completing the reaction cycle. Several rounds of ATP-dependent interactions between DnaJ, DnaK and GrpE are required for fully efficient folding. The sequence is that of Protein GrpE from Bacillus cereus (strain AH187).